The chain runs to 98 residues: Ferredoxin-like protein (98 aa).

The protein to ferredoxins from P.putida and C.tartarivorum, ferredoxin I from A.vinelandii, ferredoxin II from D.desulfuricans.

In terms of biological role, could be a 3Fe-4S cluster-containing protein. The protein is Ferredoxin-like protein (fixX) of Rhizobium leguminosarum bv. trifolii.